Consider the following 344-residue polypeptide: Dimethyladenosine transferase 1, mitochondrial (344 aa).

A mitochondrion-targeting transit peptide spans 1–27 (MATPGALAKFRLPPLPTIGEIVKLFNL). Residues N36, L38, G63, E85, K86, D111, I112, and N141 each coordinate S-adenosyl-L-methionine.

This sequence belongs to the class I-like SAM-binding methyltransferase superfamily. rRNA adenine N(6)-methyltransferase family. KsgA subfamily.

The protein resides in the mitochondrion. It carries out the reaction adenosine(N)/adenosine(N+1) in rRNA + 4 S-adenosyl-L-methionine = N(6)-dimethyladenosine(N)/N(6)-dimethyladenosine(N+1) in rRNA + 4 S-adenosyl-L-homocysteine + 4 H(+). Mitochondrial methyltransferase which uses S-adenosyl methionine to dimethylate two highly conserved adjacent adenosine residues (A1583 and A1584) within the loop of helix 45 at the 3-prime end of 12S rRNA, thereby regulating the assembly or stability of the small subunit of the mitochondrial ribosome. Also required for basal transcription of mitochondrial DNA, probably via its interaction with POLRMT and TFAM. Stimulates transcription independently of the methyltransferase activity. The protein is Dimethyladenosine transferase 1, mitochondrial (tfb1m.L) of Xenopus laevis (African clawed frog).